Reading from the N-terminus, the 265-residue chain is MIKWPWKSNETAPDALLPWDEALAIPVLASLSADEQSRLVQLADRFLQQKRLVPLQGFELDELKSARIALLFCLPVLELGIEWLDGFHEVLIYPAPFVVDDEWEDDIGLVHNQRVVQSGQSWQQGPIILNWLDIQDSFDASGFNLIVHEVAHKLDTRNGDRASGVPFIPLREVAGWEHDLHAAMNNIQDEIDLVGESAASIDAYAATDPAECFAVLSEYFFSAPELFAPRFPALWQRFCHFYQQDPMQRLRENAGYDGNASPQVH.

The Zn(2+) site is built by His111, His148, His152, and Glu211.

This sequence belongs to the MtfA family. As to quaternary structure, interacts with Mlc. It depends on Zn(2+) as a cofactor.

The protein localises to the cytoplasm. In terms of biological role, involved in the modulation of the activity of the glucose-phosphotransferase system (glucose-PTS). Interacts with the transcriptional repressor Mlc, preventing its interaction with DNA and leading to the modulation of expression of genes regulated by Mlc, including ptsG, which encodes the PTS system glucose-specific EIICB component. Its function is as follows. Shows zinc-dependent metallopeptidase activity. The protein is Mlc titration factor A of Enterobacter sp. (strain 638).